The primary structure comprises 359 residues: Peptide chain release factor 1 (359 aa).

Q235 carries the N5-methylglutamine modification. The span at 282–307 (RQRADSERSADRKSQVGSGDRSERIR) shows a compositional bias: basic and acidic residues. The interval 282 to 309 (RQRADSERSADRKSQVGSGDRSERIRTY) is disordered.

Belongs to the prokaryotic/mitochondrial release factor family. Post-translationally, methylated by PrmC. Methylation increases the termination efficiency of RF1.

The protein localises to the cytoplasm. Peptide chain release factor 1 directs the termination of translation in response to the peptide chain termination codons UAG and UAA. The chain is Peptide chain release factor 1 from Allorhizobium ampelinum (strain ATCC BAA-846 / DSM 112012 / S4) (Agrobacterium vitis (strain S4)).